The following is a 475-amino-acid chain: Aspartyl/glutamyl-tRNA(Asn/Gln) amidotransferase subunit B (475 aa).

This sequence belongs to the GatB/GatE family. GatB subfamily. Heterotrimer of A, B and C subunits.

The enzyme catalyses L-glutamyl-tRNA(Gln) + L-glutamine + ATP + H2O = L-glutaminyl-tRNA(Gln) + L-glutamate + ADP + phosphate + H(+). It carries out the reaction L-aspartyl-tRNA(Asn) + L-glutamine + ATP + H2O = L-asparaginyl-tRNA(Asn) + L-glutamate + ADP + phosphate + 2 H(+). Allows the formation of correctly charged Asn-tRNA(Asn) or Gln-tRNA(Gln) through the transamidation of misacylated Asp-tRNA(Asn) or Glu-tRNA(Gln) in organisms which lack either or both of asparaginyl-tRNA or glutaminyl-tRNA synthetases. The reaction takes place in the presence of glutamine and ATP through an activated phospho-Asp-tRNA(Asn) or phospho-Glu-tRNA(Gln). The chain is Aspartyl/glutamyl-tRNA(Asn/Gln) amidotransferase subunit B from Bacillus anthracis (strain A0248).